An 84-amino-acid polypeptide reads, in one-letter code: Small ribosomal subunit protein bS16c (84 aa).

It belongs to the bacterial ribosomal protein bS16 family.

Its subcellular location is the plastid. It localises to the chloroplast. The sequence is that of Small ribosomal subunit protein bS16c from Anthoceros angustus (Hornwort).